A 174-amino-acid chain; its full sequence is Large ribosomal subunit protein uL10 (174 aa).

The protein belongs to the universal ribosomal protein uL10 family. Part of the ribosomal stalk of the 50S ribosomal subunit. The N-terminus interacts with L11 and the large rRNA to form the base of the stalk. The C-terminus forms an elongated spine to which L12 dimers bind in a sequential fashion forming a multimeric L10(L12)X complex.

Functionally, forms part of the ribosomal stalk, playing a central role in the interaction of the ribosome with GTP-bound translation factors. The sequence is that of Large ribosomal subunit protein uL10 from Vesicomyosocius okutanii subsp. Calyptogena okutanii (strain HA).